Consider the following 190-residue polypeptide: ADP-ribosylation factor-like protein 6 (190 aa).

The N-myristoyl glycine moiety is linked to residue Gly-2. GTP-binding positions include 24–31 (GLDNSGKT), Thr-50, 69–73 (DMAGQ), Gly-72, 130–133 (NKMD), and Ala-164. Residues Thr-31 and Thr-50 each coordinate Mg(2+).

Belongs to the small GTPase superfamily. Arf family.

Its subcellular location is the cytoplasm. The protein is ADP-ribosylation factor-like protein 6 of Caenorhabditis briggsae.